A 196-amino-acid polypeptide reads, in one-letter code: Small ribosomal subunit protein uS4C (196 aa).

Residues 87–149 form the S4 RNA-binding domain; the sequence is CRLDNVVYRI…HRQNEMFSNN (63 aa).

The protein belongs to the universal ribosomal protein uS4 family. As to quaternary structure, part of the 30S ribosomal subunit. Contacts protein S5. The interaction surface between S4 and S5 is involved in control of translational fidelity.

Functionally, one of the primary rRNA binding proteins, it binds directly to 16S rRNA where it nucleates assembly of the body of the 30S subunit. In terms of biological role, with S5 and S12 plays an important role in translational accuracy. In Clostridium acetobutylicum (strain ATCC 824 / DSM 792 / JCM 1419 / IAM 19013 / LMG 5710 / NBRC 13948 / NRRL B-527 / VKM B-1787 / 2291 / W), this protein is Small ribosomal subunit protein uS4C (rpsD3).